The chain runs to 625 residues: Acetolactate synthase (625 aa).

Residues Met-1–Pro-29 are disordered. Positions Ala-14–Pro-29 are enriched in polar residues. Glu-92 contacts thiamine diphosphate. Residues Arg-194, His-300–Arg-321, and Asp-343–Asp-362 contribute to the FAD site. Residues Gln-436–Asn-516 form a thiamine pyrophosphate binding region. Mg(2+) contacts are provided by Asp-487 and Asn-514.

Belongs to the TPP enzyme family. Mg(2+) serves as cofactor. Thiamine diphosphate is required as a cofactor.

The enzyme catalyses 2 pyruvate + H(+) = (2S)-2-acetolactate + CO2. Its pathway is amino-acid biosynthesis; L-isoleucine biosynthesis; L-isoleucine from 2-oxobutanoate: step 1/4. It functions in the pathway amino-acid biosynthesis; L-valine biosynthesis; L-valine from pyruvate: step 1/4. This Mycobacterium leprae (strain TN) protein is Acetolactate synthase (ilvB).